The sequence spans 468 residues: ATP synthase subunit beta (468 aa).

155–162 (GGAGVGKT) contributes to the ATP binding site.

This sequence belongs to the ATPase alpha/beta chains family. F-type ATPases have 2 components, CF(1) - the catalytic core - and CF(0) - the membrane proton channel. CF(1) has five subunits: alpha(3), beta(3), gamma(1), delta(1), epsilon(1). CF(0) has three main subunits: a(1), b(2) and c(9-12). The alpha and beta chains form an alternating ring which encloses part of the gamma chain. CF(1) is attached to CF(0) by a central stalk formed by the gamma and epsilon chains, while a peripheral stalk is formed by the delta and b chains.

The protein localises to the cell membrane. It catalyses the reaction ATP + H2O + 4 H(+)(in) = ADP + phosphate + 5 H(+)(out). Its function is as follows. Produces ATP from ADP in the presence of a proton gradient across the membrane. The catalytic sites are hosted primarily by the beta subunits. The sequence is that of ATP synthase subunit beta from Streptococcus pneumoniae serotype 19F (strain G54).